The chain runs to 574 residues: MQGSSTSILHFVPSDPTSTSVLDFLSPTPRGTSPVHDRRLHAGDLALRAGGDRLLVADTVAAVVESLVQAWRQVRMELLVPLLRGAVVACMVMSVIVLAEKVFLGVVSAVVKLLRRRPARLYRCDPVVVEDDDEAGRASFPMVLVQIPMYNEKEVYQLSIGAACRLTWPADRLIVQVLDDSTDAIVKELVRKECERWGKKGINVKYETRKDRAGYKAGNLREGMRRGYVQGCEFVAMLDADFQPPPDFLLKTVPFLVHNPRLALVQTRWEFVNANDCLLTRMQEMSMDYHFKVEQEAGSSLCNFFGYNGTAGVWRRQVIDESGGWEDRTTAEDMDLALRAGLLGWEFVYVGSIKVKSELPSTLKAYRSQQHRWSCGPALLFKKMFWEILAAKKVSFWKKLYMTYDFFIARRIISTFFTFFFFSVLLPMKVFFPEVQIPLWELILIPTAIILLHSVGTPRSIHLIILWFLFENVMALHRLKATLIGFFEAGRANEWIVTQKLGNIQKLKSIVRVTKNCRFKDRFHCLELFIGGFLLTSACYDYLYRDDIFYIFLLSQSIIYFAIGFEFMGVSVSS.

A helical membrane pass occupies residues V87–V107. D180 is a catalytic residue. Positions 239 and 241 each coordinate substrate. D333 is an active-site residue. Helical transmembrane passes span I412 to F432, I437 to T457, F523 to L543, and I548 to M568.

It belongs to the glycosyltransferase 2 family. Plant cellulose synthase-like A subfamily.

It is found in the golgi apparatus membrane. It catalyses the reaction GDP-mannose + (glucomannan)n = GDP + (glucomannan)n+1.. In terms of biological role, probable mannan synthase which consists of a 4-beta-mannosyltransferase activity on mannan using GDP-mannose. The beta-1,4-mannan product is the backbone for galactomannan synthesis by galactomannan galactosyltransferase. Galactomannan is a noncellulosic polysaccharides of plant cell wall. The chain is Probable glucomannan 4-beta-mannosyltransferase 6 from Oryza sativa subsp. japonica (Rice).